A 508-amino-acid polypeptide reads, in one-letter code: Photosystem II CP47 reaction center protein (508 aa).

Helical transmembrane passes span 21 to 36 (SVHI…WAGS), 101 to 115 (IVFS…IWHW), 140 to 156 (GIHL…FGAF), 203 to 218 (IAAG…FHLS), 237 to 252 (VLSS…AFVV), and 457 to 472 (SFAL…HGSR).

It belongs to the PsbB/PsbC family. PsbB subfamily. PSII is composed of 1 copy each of membrane proteins PsbA, PsbB, PsbC, PsbD, PsbE, PsbF, PsbH, PsbI, PsbJ, PsbK, PsbL, PsbM, PsbT, PsbX, PsbY, PsbZ, Psb30/Ycf12, at least 3 peripheral proteins of the oxygen-evolving complex and a large number of cofactors. It forms dimeric complexes. It depends on Binds multiple chlorophylls. PSII binds additional chlorophylls, carotenoids and specific lipids. as a cofactor.

The protein localises to the plastid. It is found in the chloroplast thylakoid membrane. In terms of biological role, one of the components of the core complex of photosystem II (PSII). It binds chlorophyll and helps catalyze the primary light-induced photochemical processes of PSII. PSII is a light-driven water:plastoquinone oxidoreductase, using light energy to abstract electrons from H(2)O, generating O(2) and a proton gradient subsequently used for ATP formation. The chain is Photosystem II CP47 reaction center protein from Fagopyrum esculentum subsp. ancestrale (Wild buckwheat).